Reading from the N-terminus, the 396-residue chain is Ribosomal RNA large subunit methyltransferase I (396 aa).

Positions 2-81 constitute a PUA domain; that stretch reads SVRLVLAKGR…ESIDIAFFTR (80 aa).

Belongs to the methyltransferase superfamily. RlmI family.

The protein localises to the cytoplasm. The catalysed reaction is cytidine(1962) in 23S rRNA + S-adenosyl-L-methionine = 5-methylcytidine(1962) in 23S rRNA + S-adenosyl-L-homocysteine + H(+). Functionally, specifically methylates the cytosine at position 1962 (m5C1962) of 23S rRNA. The polypeptide is Ribosomal RNA large subunit methyltransferase I (Escherichia coli O1:K1 / APEC).